The following is a 1249-amino-acid chain: Voltage-dependent calcium channel unc-36 (1249 aa).

A signal peptide spans 1–19 (MRVVHLLVVLATYVSTTSS). The Extracellular portion of the chain corresponds to 20 to 1228 (FNKESIKECA…SENERRPCST (1209 aa)). N-linked (GlcNAc...) asparagine glycans are attached at residues N100, N140, N146, N302, N520, N558, N757, N838, N903, N923, and N1130. Positions 250–479 (NVLIMLDMSG…EKIHHYIRRM (230 aa)) constitute a VWFA domain. The chain crosses the membrane as a helical span at residues 1229-1248 (SPTIVSIFQILFGVFLHFCI). F1249 is a topological domain (cytoplasmic).

In terms of tissue distribution, decendants of the cells AB and AB.p (that give rise to nearly all non-pharyngeal neurons), decendants of P1 (that give rise to body muscle) and cell lineages that give rise to the adult and juvenile motor neurons. Expressed in body wall, vulval muscle and pharyngeal muscle.

The protein resides in the membrane. In terms of biological role, may act as an auxiliary subunit of the unc-2 voltage-gated calcium channel which appears to trigger calcium-activated signaling pathways that control the serotonin response. Inhibiting serotonin sensitivity of the vulval muscles results in egg laying defects. May act in both neurons and muscle cells to enhance motor activity as it is required for coordinated movement. Has a role in neural depolarization-induced calcium influx and pharyngeal pumping. Involved in restricting the expression of the putative olfactory receptor str-2 to only one of the two AWC neurons. In Caenorhabditis elegans, this protein is Voltage-dependent calcium channel unc-36 (unc-36).